Consider the following 146-residue polypeptide: Large ribosomal subunit protein bL9 (146 aa).

It belongs to the bacterial ribosomal protein bL9 family.

Binds to the 23S rRNA. The protein is Large ribosomal subunit protein bL9 of Flavobacterium johnsoniae (strain ATCC 17061 / DSM 2064 / JCM 8514 / BCRC 14874 / CCUG 350202 / NBRC 14942 / NCIMB 11054 / UW101) (Cytophaga johnsonae).